The primary structure comprises 256 residues: UPF0246 protein Sde_3824 (256 aa).

Belongs to the UPF0246 family.

This Saccharophagus degradans (strain 2-40 / ATCC 43961 / DSM 17024) protein is UPF0246 protein Sde_3824.